A 411-amino-acid chain; its full sequence is Putative competence-damage inducible protein (411 aa).

This sequence belongs to the CinA family.

The polypeptide is Putative competence-damage inducible protein (Desulforamulus reducens (strain ATCC BAA-1160 / DSM 100696 / MI-1) (Desulfotomaculum reducens)).